We begin with the raw amino-acid sequence, 334 residues long: Retinol dehydrogenase 14 (334 aa).

51–57 (GANSGLG) is a binding site for NADP(+). Serine 190 provides a ligand contact to substrate. The active-site Proton acceptor is the tyrosine 215.

This sequence belongs to the short-chain dehydrogenases/reductases (SDR) family.

The enzyme catalyses all-trans-retinol + NADP(+) = all-trans-retinal + NADPH + H(+). It catalyses the reaction 11-cis-retinol + NADP(+) = 11-cis-retinal + NADPH + H(+). It carries out the reaction 9-cis-retinol + NADP(+) = 9-cis-retinal + NADPH + H(+). In terms of biological role, retinol dehydrogenase with a clear preference for NADP. Displays high activity towards 9-cis, 11-cis and all-trans-retinol. Shows a very weak activity towards 13-cis-retinol. Has no activity towards steroids. The sequence is that of Retinol dehydrogenase 14 (Rdh14) from Mus musculus (Mouse).